The sequence spans 374 residues: GPN-loop GTPase 1 (374 aa).

Residue A2 is modified to N-acetylalanine. Position 29–34 (29–34 (GSGKTT)) interacts with GTP. The Gly-Pro-Asn (GPN)-loop; involved in dimer interface motif lies at 86-88 (GPN). Position 189–192 (189–192 (NKTD)) interacts with GTP. 3 positions are modified to phosphoserine: S301, S312, and S314. Residues 326-354 (RGTLDEEDEEADSDTDDIDHRVTEESHEE) form a disordered region. Phosphothreonine is present on T328. A compositionally biased stretch (acidic residues) spans 330–342 (DEEDEEADSDTDD). Position 338 is a phosphoserine (S338). T340 carries the post-translational modification Phosphothreonine. Over residues 343 to 354 (IDHRVTEESHEE) the composition is skewed to basic and acidic residues.

It belongs to the GPN-loop GTPase family. Heterodimer with GPN3. Binds to RNA polymerase II (RNAPII). Interacts directly with RNAPII subunits RPB4 and RPB7 and the CTD of RPB1. Interacts with XPA. In terms of tissue distribution, expressed ubiquitously.

The protein localises to the cytoplasm. The protein resides in the nucleus. Functionally, small GTPase required for proper nuclear import of RNA polymerase II (RNAPII). May act at an RNAP assembly step prior to nuclear import. Forms an interface between the RNA polymerase II enzyme and chaperone/scaffolding proteins, suggesting that it is required to connect RNA polymerase II to regulators of protein complex formation. May be involved in nuclear localization of XPA. The polypeptide is GPN-loop GTPase 1 (Homo sapiens (Human)).